Consider the following 641-residue polypeptide: Chaperone protein HtpG (641 aa).

The segment at 1 to 351 is a; substrate-binding; that stretch reads MTQSVHAETH…SNDLPLNVSR (351 aa). A b region spans residues 352 to 568; it reads EILQDNKVTV…AHGMSTQMIK (217 aa). The interval 569–641 is c; sequence LMRAAGQPVP…SRINRLLLQA (73 aa).

The protein belongs to the heat shock protein 90 family. In terms of assembly, homodimer.

The protein resides in the cytoplasm. Molecular chaperone. Has ATPase activity. This chain is Chaperone protein HtpG, found in Aeromonas hydrophila subsp. hydrophila (strain ATCC 7966 / DSM 30187 / BCRC 13018 / CCUG 14551 / JCM 1027 / KCTC 2358 / NCIMB 9240 / NCTC 8049).